The chain runs to 317 residues: Transaldolase (317 aa).

The Schiff-base intermediate with substrate role is filled by Lys-126.

It belongs to the transaldolase family. Type 1 subfamily. Homodimer.

Its subcellular location is the cytoplasm. The enzyme catalyses D-sedoheptulose 7-phosphate + D-glyceraldehyde 3-phosphate = D-erythrose 4-phosphate + beta-D-fructose 6-phosphate. The protein operates within carbohydrate degradation; pentose phosphate pathway; D-glyceraldehyde 3-phosphate and beta-D-fructose 6-phosphate from D-ribose 5-phosphate and D-xylulose 5-phosphate (non-oxidative stage): step 2/3. Functionally, transaldolase is important for the balance of metabolites in the pentose-phosphate pathway. The protein is Transaldolase of Burkholderia ambifaria (strain ATCC BAA-244 / DSM 16087 / CCUG 44356 / LMG 19182 / AMMD) (Burkholderia cepacia (strain AMMD)).